A 273-amino-acid polypeptide reads, in one-letter code: DNA replication complex GINS protein psf2 (273 aa).

2 disordered regions span residues 88 to 110 (KEDP…SQPG) and 240 to 273 (ASAE…DMGL). Over residues 244-257 (ATRREEEEEARRGG) the composition is skewed to basic and acidic residues. A compositionally biased stretch (acidic residues) spans 261-273 (GDGDEDSDEDMGL).

Belongs to the GINS2/PSF2 family. Component of the GINS complex which is a heterotetramer of div-26/sld5, drc-1/psf1, drc-2/psf2 and drc-3/psf3.

The protein localises to the nucleus. In terms of biological role, the GINS complex plays an essential role in the initiation of DNA replication. Has a role in chromosome segregation. This Neurospora crassa (strain ATCC 24698 / 74-OR23-1A / CBS 708.71 / DSM 1257 / FGSC 987) protein is DNA replication complex GINS protein psf2 (drc-2).